The following is a 139-amino-acid chain: MRTLWIMAVLLLGVEGSLMQFEMLIMKLAKSSGMFWYSAYGCYCGWGGQGRPQDATDRCCFVHDCCYGKATGCDPKKDVYTYSEENGDIVCGGDDPCRKEVCECDKAAAICFRDNMDTYNSKTYWMFPAKNCQEESEPC.

An N-terminal signal peptide occupies residues 1–16 (MRTLWIMAVLLLGVEG). 7 cysteine pairs are disulfide-bonded: Cys42-Cys132, Cys44-Cys60, Cys59-Cys111, Cys65-Cys139, Cys66-Cys104, Cys73-Cys97, and Cys91-Cys102. Residues Tyr43, Gly45, and Gly47 each coordinate Ca(2+). The active site involves His63. Asp64 provides a ligand contact to Ca(2+). Asp105 is an active-site residue.

Belongs to the phospholipase A2 family. Group II subfamily. D49 sub-subfamily. In terms of assembly, monomer. It depends on Ca(2+) as a cofactor. In terms of tissue distribution, expressed by the venom gland.

Its subcellular location is the secreted. The catalysed reaction is a 1,2-diacyl-sn-glycero-3-phosphocholine + H2O = a 1-acyl-sn-glycero-3-phosphocholine + a fatty acid + H(+). Functionally, snake venom phospholipase A2 (PLA2) that inhibits the ADP-(IC(50)=272 nM) and collagen-induced (IC(50)=518 nM) human platelet aggregation in platelet rich plasma. Exhibits very high hydrolytic activities toward the synthetic lecithin, and prefers the anionic micelles (dPPC with deoxycholate) to the zwitterionic micelles (dPPC with Triton X-100). PLA2 catalyzes the calcium-dependent hydrolysis of the 2-acyl groups in 3-sn-phosphoglycerides. The protein is Acidic phospholipase A2 Tgc-E6 of Trimeresurus gracilis (Kikuchi habu).